The primary structure comprises 931 residues: Protocadherin gamma-B2 (931 aa).

An N-terminal signal peptide occupies residues 1 to 30 (MKASSGRCGLVRWLQVLLPFLLSLFPGALP). 6 Cadherin domains span residues 31–133 (VQIR…TPLF), 134–242 (KQTK…PPVF), 243–347 (SQDV…APEV), 348–452 (IVTS…APVF), 453–562 (QQTS…APRV), and 570–675 (DGSA…LPDL). Residues 31–691 (VQIRYSIPEE…SDPQAKLQFY (661 aa)) are Extracellular-facing. 2 N-linked (GlcNAc...) asparagine glycosylation sites follow: Asn419 and Asn545. A helical membrane pass occupies residues 692 to 712 (LVVALALISVLFFLAVILAIS). Over 713 to 931 (LRLRLSSRSD…KKKSGKKEKK (219 aa)) the chain is Cytoplasmic. Disordered regions lie at residues 814–840 (DWRF…WPNN) and 901–931 (ATLT…KEKK). The span at 815-840 (WRFSQAQRPGTSGSQNGDDTGTWPNN) shows a compositional bias: polar residues. Residues 921-931 (NKKKSGKKEKK) show a composition bias toward basic residues.

It localises to the cell membrane. Its function is as follows. Potential calcium-dependent cell-adhesion protein. May be involved in the establishment and maintenance of specific neuronal connections in the brain. This chain is Protocadherin gamma-B2 (PCDHGB2), found in Homo sapiens (Human).